The primary structure comprises 469 residues: tRNA-2-methylthio-N(6)-dimethylallyladenosine synthase (469 aa).

The region spanning 27 to 142 (KKVYIRTFGC…LPQMLAQRAR (116 aa)) is the MTTase N-terminal domain. Residues cysteine 36, cysteine 73, cysteine 105, cysteine 179, cysteine 183, and cysteine 186 each coordinate [4Fe-4S] cluster. One can recognise a Radical SAM core domain in the interval 165–398 (KVDGAAAFVS…QATIEDNVRR (234 aa)). The TRAM domain maps to 401–467 (ERRVGTVQRV…PHSLRGEPVL (67 aa)).

This sequence belongs to the methylthiotransferase family. MiaB subfamily. As to quaternary structure, monomer. Requires [4Fe-4S] cluster as cofactor.

The protein resides in the cytoplasm. It catalyses the reaction N(6)-dimethylallyladenosine(37) in tRNA + (sulfur carrier)-SH + AH2 + 2 S-adenosyl-L-methionine = 2-methylsulfanyl-N(6)-dimethylallyladenosine(37) in tRNA + (sulfur carrier)-H + 5'-deoxyadenosine + L-methionine + A + S-adenosyl-L-homocysteine + 2 H(+). Catalyzes the methylthiolation of N6-(dimethylallyl)adenosine (i(6)A), leading to the formation of 2-methylthio-N6-(dimethylallyl)adenosine (ms(2)i(6)A) at position 37 in tRNAs that read codons beginning with uridine. This Leptothrix cholodnii (strain ATCC 51168 / LMG 8142 / SP-6) (Leptothrix discophora (strain SP-6)) protein is tRNA-2-methylthio-N(6)-dimethylallyladenosine synthase.